The sequence spans 302 residues: 4-hydroxy-tetrahydrodipicolinate synthase (302 aa).

Thr-46 provides a ligand contact to pyruvate. The active-site Proton donor/acceptor is Tyr-134. Catalysis depends on Lys-162, which acts as the Schiff-base intermediate with substrate. Val-204 is a binding site for pyruvate.

This sequence belongs to the DapA family. Homotetramer; dimer of dimers.

The protein localises to the cytoplasm. It carries out the reaction L-aspartate 4-semialdehyde + pyruvate = (2S,4S)-4-hydroxy-2,3,4,5-tetrahydrodipicolinate + H2O + H(+). The protein operates within amino-acid biosynthesis; L-lysine biosynthesis via DAP pathway; (S)-tetrahydrodipicolinate from L-aspartate: step 3/4. Its function is as follows. Catalyzes the condensation of (S)-aspartate-beta-semialdehyde [(S)-ASA] and pyruvate to 4-hydroxy-tetrahydrodipicolinate (HTPA). The polypeptide is 4-hydroxy-tetrahydrodipicolinate synthase (Xanthomonas campestris pv. campestris (strain ATCC 33913 / DSM 3586 / NCPPB 528 / LMG 568 / P 25)).